The sequence spans 82 residues: uncharacterized protein (82 aa).

The next 2 helical transmembrane spans lie at L8–P28 and L50–L70.

It localises to the cell membrane. This is an uncharacterized protein from Escherichia coli (strain K12).